Reading from the N-terminus, the 534-residue chain is MLGEMWSFNGRYKILHMTWFAFFLSFVVWFNFPPFATTIAQDFGLDKAQLGTIGLCNVALTVPARIIIGMLLDKYGPRLTYSLLLIYAAVPCLIFATAQSFNQLVLGRLLMGIVGAGFVIGIRMVAEWFPPKDVGTAEGIYGGWGNFGSAFSAFTMVIFGIILAFLPGAFNFGQPESFKILFFPEFNTAILNWRAAIAGTGIIAALYGMLYYFSVSDTPPGKTYHRPKSARGMEVTTKKDFWFLLAMNLPLTLILMVLAWRLQKVNFLNGTGFAIAILALVGLYLFQTYNCWTVNKDLMTGKKRYAPEDRYEFSQVAILELTYIVNFGSELAVVTMLPAFFEGTFSLDKATAGIIASSYAFMNLMSRPGGGLISDKMGSRKWTMVVLTVGMGVGYLLMSSVAGTWPLAIAVLLTMACSFFVQAAEGSTFAIVPLVKRRITGQIAGNVGAYGNVGAVAYLTVLLLLTEASAGANGGEPVMATVNAGFFQVLGITGLIVAFLCAFFLKEPKGSFAEFHEGETEMTATPPIEEEATY.

12 helical membrane passes run 19 to 39, 52 to 72, 79 to 99, 109 to 129, 150 to 170, 195 to 215, 240 to 260, 266 to 286, 382 to 404, 409 to 431, 445 to 465, and 485 to 505; these read WFAFFLSFVVWFNFPPFATTI, TIGLCNVALTVPARIIIGMLL, LTYSLLLIYAAVPCLIFATAQ, LLMGIVGAGFVIGIRMVAEWF, AFSAFTMVIFGIILAFLPGAF, AAIAGTGIIAALYGMLYYFSV, DFWFLLAMNLPLTLILMVLAW, NFLNGTGFAIAILALVGLYLF, WTMVVLTVGMGVGYLLMSSVAGT, IAVLLTMACSFFVQAAEGSTFAI, GNVGAYGNVGAVAYLTVLLLL, and GFFQVLGITGLIVAFLCAFFL.

This sequence belongs to the major facilitator superfamily. Nitrate/nitrite porter (TC 2.A.1.8) family.

The protein localises to the cell inner membrane. Functionally, high-efficiency transport system for both nitrate and nitrite. This is Nitrate/nitrite transporter NrtP from Picosynechococcus sp. (strain ATCC 27264 / PCC 7002 / PR-6) (Agmenellum quadruplicatum).